A 493-amino-acid polypeptide reads, in one-letter code: Glutamyl-tRNA(Gln) amidotransferase subunit A (493 aa).

Residues K78 and S158 each act as charge relay system in the active site. S182 (acyl-ester intermediate) is an active-site residue.

This sequence belongs to the amidase family. GatA subfamily. Heterotrimer of A, B and C subunits.

The enzyme catalyses L-glutamyl-tRNA(Gln) + L-glutamine + ATP + H2O = L-glutaminyl-tRNA(Gln) + L-glutamate + ADP + phosphate + H(+). Functionally, allows the formation of correctly charged Gln-tRNA(Gln) through the transamidation of misacylated Glu-tRNA(Gln) in organisms which lack glutaminyl-tRNA synthetase. The reaction takes place in the presence of glutamine and ATP through an activated gamma-phospho-Glu-tRNA(Gln). The chain is Glutamyl-tRNA(Gln) amidotransferase subunit A from Rickettsia typhi (strain ATCC VR-144 / Wilmington).